The primary structure comprises 447 residues: N-succinylarginine dihydrolase (447 aa).

Residues 19 to 28 (AGLSFGNEAS), N110, and 137 to 138 (HR) each bind substrate. Residue E174 is part of the active site. R212 lines the substrate pocket. H248 is an active-site residue. Substrate-binding residues include D250 and N359. Catalysis depends on C365, which acts as the Nucleophile.

It belongs to the succinylarginine dihydrolase family. In terms of assembly, homodimer.

The enzyme catalyses N(2)-succinyl-L-arginine + 2 H2O + 2 H(+) = N(2)-succinyl-L-ornithine + 2 NH4(+) + CO2. Its pathway is amino-acid degradation; L-arginine degradation via AST pathway; L-glutamate and succinate from L-arginine: step 2/5. Its function is as follows. Catalyzes the hydrolysis of N(2)-succinylarginine into N(2)-succinylornithine, ammonia and CO(2). This is N-succinylarginine dihydrolase from Shigella boydii serotype 4 (strain Sb227).